Consider the following 419-residue polypeptide: G-protein coupled receptor 151 (419 aa).

Residues 1 to 41 (MLAAAFADSNSSSMNVSFAHLHFAGGYLPSDSQDWRTIIPA) lie on the Extracellular side of the membrane. N-linked (GlcNAc...) asparagine glycosylation is found at Asn-10 and Asn-15. A helical transmembrane segment spans residues 42–62 (LLVAVCLVGFVGNLCVIGILL). The Cytoplasmic segment spans residues 63–71 (HNAWKGKPS). The helical transmembrane segment at 72-92 (MIHSLILNLSLADLSLLLFSA) threads the bilayer. The Extracellular portion of the chain corresponds to 93-116 (PIRATAYSKSVWDLGWFVCKSSDW). A disulfide bridge links Cys-111 with Cys-187. A helical membrane pass occupies residues 117–137 (FIHTCMAAKSLTIVVVAKVCF). The Cytoplasmic portion of the chain corresponds to 138–153 (MYASDPAKQVSIHNYT). Residues 154–174 (IWSVLVAIWTVASLLPLPEWF) form a helical membrane-spanning segment. The Extracellular segment spans residues 175–201 (FSTIRHHEGVEMCLVDVPAVAEEFMSM). Residues 202–222 (FGKLYPLLAFGLPLFFASFYF) traverse the membrane as a helical segment. The Cytoplasmic segment spans residues 223 to 252 (WRAYDQCKKRGTKTQNLRNQIRSKQVTVML). A helical membrane pass occupies residues 253–273 (LSIAIISALLWLPEWVAWLWV). Residues 274-286 (WHLKAAGPAPPQG) are Extracellular-facing. The chain crosses the membrane as a helical span at residues 287–307 (FIALSQVLMFSISSANPLIFL). Residues 308–419 (VMSEEFREGL…EDQETGEGVK (112 aa)) lie on the Cytoplasmic side of the membrane. The interval 330–419 (PTVSESQETP…EDQETGEGVK (90 aa)) is disordered. The segment covering 332–341 (VSESQETPAG) has biased composition (polar residues). The segment covering 410–419 (EDQETGEGVK) has biased composition (acidic residues).

It belongs to the G-protein coupled receptor 1 family. High expression in the spinal cord.

It localises to the cell membrane. Proton-sensing G-protein coupled receptor. The sequence is that of G-protein coupled receptor 151 (GPR151) from Homo sapiens (Human).